Reading from the N-terminus, the 252-residue chain is Short-chain dehydrogenase/reductase eriH (252 aa).

Positions 16, 65, 92, 125, 158, 162, 191, and 193 each coordinate NADP(+). Tyr158 acts as the Proton acceptor in catalysis. Tyr158 (proton donor) is an active-site residue. The Lowers pKa of active site Tyr role is filled by Lys162.

This sequence belongs to the short-chain dehydrogenases/reductases (SDR) family.

It catalyses the reaction cyathadiol + reduced [NADPH--hemoprotein reductase] + O2 = cyathatriol + oxidized [NADPH--hemoprotein reductase] + H2O + H(+). The catalysed reaction is 11-O-acetylcyathatriol + A = 11-O-acetylcyathin A3 + AH2. It carries out the reaction cyathatriol + A = cyathin A3 + AH2. Its pathway is secondary metabolite biosynthesis. Its function is as follows. Short-chain dehydrogenase/reductase; part of the gene cluster that mediates the biosynthesis of erinacines, cyathane-xylosides that show unique biological activities, including leishmanicidal activity, stimulating activity for nerve growth-factor synthesis, and agonistic activity toward the kappa opioid receptor. Within the pathway, eriH works with eriA to catalyze C-11 hydroxylation of cyathadiol to produce cyathatriol. EriH also catalyzes oxidation of 11-O-acetyl-cyathatriol into 1-O-acetylcyathin A3. In the absence of eriL and eriJ, the SDR eriH is able to convert cyathatriol to cyathin A3; this is likely a switching mechanism in the biosynthesis of cyathins (C-14 ketogroup)and erinacines (C-14 glycosylated group). The first step of the erinacines biosynthesis pathway is catalyzed by the geranylgeranyl diphosphate (GGPP) synthase eriE via conversion of farnesyl pyrophosphate and isopentyl pyrophosphate into geranylgeranyl pyrophosphate (GGPP). GGPP is then substrate of the diterpene cyclase eriG for the production of cyatha-3,12-diene. The cytochrome P450 monooxygenase eriI then hydroxylates cyatha-3,12-diene at C-14 of the seven-membered ring to produce erinacol, which is further hydroxylated at C-15 by the cytochrome P450 monooxygenase eriC to yield cyathadiol. The cytochrome P450 monooxygenase eriA then catalyzes C-11 hydroxylation in the presence of the short chain dehydrogenase/reductase (SDR) eriH, which leads to the production of cyathatriol. The acetyltransferase eriL converts cyathatriol into 11-O-acetyl-cyathatriol. The SDR eriH catalyzes further oxidation of 11-O-acetyl-cyathatriol into 1-O-acetylcyathin A3. Finally, the glycosyl transferase eriJ tranfers xylose from UDP-xylose onto C-14 of 11-O-acetyl-cyathatriol to form eracine Q. EriJ is also able to convert 11-O-acetyl-cyathatriol to eracine Q2 by using UDP-D-glucose as cosubstrate, but at a lower rate. In Hericium erinaceus (Lion's mane mushroom), this protein is Short-chain dehydrogenase/reductase eriH.